A 56-amino-acid polypeptide reads, in one-letter code: Small ribosomal subunit protein uS14 (56 aa).

It belongs to the universal ribosomal protein uS14 family. Component of the small ribosomal subunit (SSU). Mature yeast ribosomes consist of a small (40S) and a large (60S) subunit. The 40S small subunit contains 1 molecule of ribosomal RNA (18S rRNA) and at least 33 different proteins. The large 60S subunit contains 3 rRNA molecules (25S, 5.8S and 5S rRNA) and at least 46 different proteins.

It localises to the cytoplasm. Its subcellular location is the nucleus. Its function is as follows. Component of the ribosome, a large ribonucleoprotein complex responsible for the synthesis of proteins in the cell. The small ribosomal subunit (SSU) binds messenger RNAs (mRNAs) and translates the encoded message by selecting cognate aminoacyl-transfer RNA (tRNA) molecules. The large subunit (LSU) contains the ribosomal catalytic site termed the peptidyl transferase center (PTC), which catalyzes the formation of peptide bonds, thereby polymerizing the amino acids delivered by tRNAs into a polypeptide chain. The nascent polypeptides leave the ribosome through a tunnel in the LSU and interact with protein factors that function in enzymatic processing, targeting, and the membrane insertion of nascent chains at the exit of the ribosomal tunnel. The protein is Small ribosomal subunit protein uS14 (rps29) of Schizosaccharomyces pombe (strain 972 / ATCC 24843) (Fission yeast).